Reading from the N-terminus, the 457-residue chain is Bifunctional protein GlmU (457 aa).

Residues 1-232 (MAKVAAIVLA…PMEVMGVNDR (232 aa)) are pyrophosphorylase. UDP-N-acetyl-alpha-D-glucosamine contacts are provided by residues 9–12 (LAAG), lysine 23, glutamine 75, and 80–81 (GT). Aspartate 105 is a binding site for Mg(2+). Positions 142, 157, 172, and 230 each coordinate UDP-N-acetyl-alpha-D-glucosamine. A Mg(2+)-binding site is contributed by asparagine 230. Positions 233–253 (VQLAEAGRIIRVRINKALMVA) are linker. Residues 254–457 (GTTIIDPETT…NKEGWKLKNK (204 aa)) form an N-acetyltransferase region. The UDP-N-acetyl-alpha-D-glucosamine site is built by arginine 336 and lysine 354. Histidine 366 (proton acceptor) is an active-site residue. The UDP-N-acetyl-alpha-D-glucosamine site is built by tyrosine 369 and asparagine 380. Acetyl-CoA contacts are provided by residues 389-390 (NY), serine 408, alanine 426, and arginine 443.

This sequence in the N-terminal section; belongs to the N-acetylglucosamine-1-phosphate uridyltransferase family. The protein in the C-terminal section; belongs to the transferase hexapeptide repeat family. Homotrimer. Mg(2+) is required as a cofactor.

It localises to the cytoplasm. The enzyme catalyses alpha-D-glucosamine 1-phosphate + acetyl-CoA = N-acetyl-alpha-D-glucosamine 1-phosphate + CoA + H(+). The catalysed reaction is N-acetyl-alpha-D-glucosamine 1-phosphate + UTP + H(+) = UDP-N-acetyl-alpha-D-glucosamine + diphosphate. It functions in the pathway nucleotide-sugar biosynthesis; UDP-N-acetyl-alpha-D-glucosamine biosynthesis; N-acetyl-alpha-D-glucosamine 1-phosphate from alpha-D-glucosamine 6-phosphate (route II): step 2/2. It participates in nucleotide-sugar biosynthesis; UDP-N-acetyl-alpha-D-glucosamine biosynthesis; UDP-N-acetyl-alpha-D-glucosamine from N-acetyl-alpha-D-glucosamine 1-phosphate: step 1/1. The protein operates within bacterial outer membrane biogenesis; LPS lipid A biosynthesis. In terms of biological role, catalyzes the last two sequential reactions in the de novo biosynthetic pathway for UDP-N-acetylglucosamine (UDP-GlcNAc). The C-terminal domain catalyzes the transfer of acetyl group from acetyl coenzyme A to glucosamine-1-phosphate (GlcN-1-P) to produce N-acetylglucosamine-1-phosphate (GlcNAc-1-P), which is converted into UDP-GlcNAc by the transfer of uridine 5-monophosphate (from uridine 5-triphosphate), a reaction catalyzed by the N-terminal domain. The polypeptide is Bifunctional protein GlmU (Geotalea daltonii (strain DSM 22248 / JCM 15807 / FRC-32) (Geobacter daltonii)).